The chain runs to 446 residues: D(1A) dopamine receptor (446 aa).

At M1–R22 the chain is on the extracellular side. N4 is a glycosylation site (N-linked (GlcNAc...) asparagine). The chain crosses the membrane as a helical span at residues I23–I48. Topologically, residues R49–N59 are cytoplasmic. A helical transmembrane segment spans residues F60 to A86. Residues G87 to C95 are Extracellular-facing. C95 and C186 are disulfide-bonded. A helical membrane pass occupies residues N96 to V118. At D119–K137 the chain is on the cytoplasmic side. The chain crosses the membrane as a helical span at residues A138–W162. The Extracellular segment spans residues H163–R192. Residues T193–Y218 traverse the membrane as a helical segment. Over R219–K272 the chain is Cytoplasmic. The chain crosses the membrane as a helical span at residues T273 to G299. Residues S300–T312 lie on the Extracellular side of the membrane. A helical membrane pass occupies residues F313–F337. Topologically, residues Q338–T446 are cytoplasmic. 2 S-palmitoyl cysteine lipidation sites follow: C347 and C351. S441 is subject to Phosphoserine.

The protein belongs to the G-protein coupled receptor 1 family. Interacts with DNAJC14 via its C-terminus. Interacts with DRD2. Interacts with DORIP1.

It is found in the cell membrane. The protein resides in the endoplasmic reticulum membrane. The protein localises to the cell projection. It localises to the cilium membrane. Its subcellular location is the dendrite. It is found in the dendritic spine. In terms of biological role, dopamine receptor whose activity is mediated by G proteins which activate adenylyl cyclase. The sequence is that of D(1A) dopamine receptor (Drd1) from Mus musculus (Mouse).